The sequence spans 200 residues: Small heat shock protein hspG2 (200 aa).

The 168-residue stretch at 33-200 (NKRIDIIPSM…DNFQIKLKSI (168 aa)) folds into the sHSP domain. Positions 86–139 (KLQQQQQQQSEKSSQSTNNKDDDEPSIEEYEDDTKLKSNLNKNTENKDENKTTS) are disordered. Over residues 88 to 101 (QQQQQQQSEKSSQS) the composition is skewed to low complexity. Residues 106-117 (DDDEPSIEEYED) are compositionally biased toward acidic residues.

The protein belongs to the small heat shock protein (HSP20) family.

The polypeptide is Small heat shock protein hspG2 (hspG2) (Dictyostelium discoideum (Social amoeba)).